Here is a 126-residue protein sequence, read N- to C-terminus: Small ribosomal subunit protein bS6 (126 aa).

Residues 101–126 form a disordered region; the sequence is VMMKAKEERTAKREDAAPRAEEAAAE. Positions 104–126 are enriched in basic and acidic residues; it reads KAKEERTAKREDAAPRAEEAAAE.

The protein belongs to the bacterial ribosomal protein bS6 family.

In terms of biological role, binds together with bS18 to 16S ribosomal RNA. The sequence is that of Small ribosomal subunit protein bS6 from Aliivibrio salmonicida (strain LFI1238) (Vibrio salmonicida (strain LFI1238)).